The sequence spans 425 residues: Trigger factor (425 aa).

One can recognise a PPIase FKBP-type domain in the interval 163-248; sequence GDTAVIDFEG…VHEIKTKELP (86 aa).

The protein belongs to the FKBP-type PPIase family. Tig subfamily.

It is found in the cytoplasm. It carries out the reaction [protein]-peptidylproline (omega=180) = [protein]-peptidylproline (omega=0). Functionally, involved in protein export. Acts as a chaperone by maintaining the newly synthesized protein in an open conformation. Functions as a peptidyl-prolyl cis-trans isomerase. This chain is Trigger factor, found in Bacillus anthracis (strain A0248).